The chain runs to 82 residues: Small ribosomal subunit protein uS17 (82 aa).

This sequence belongs to the universal ribosomal protein uS17 family. In terms of assembly, part of the 30S ribosomal subunit.

Functionally, one of the primary rRNA binding proteins, it binds specifically to the 5'-end of 16S ribosomal RNA. The sequence is that of Small ribosomal subunit protein uS17 from Shewanella woodyi (strain ATCC 51908 / MS32).